The primary structure comprises 67 residues: Beta-mammal toxin CeII9 (67 aa).

The LCN-type CS-alpha/beta domain occupies 1–66; that stretch reads KEGYLVNHST…VWPLPKKTCN (66 aa). Disulfide bonds link Cys12-Cys65, Cys16-Cys41, Cys25-Cys46, and Cys29-Cys48.

It belongs to the long (4 C-C) scorpion toxin superfamily. Sodium channel inhibitor family. Beta subfamily. As to expression, expressed by the venom gland.

It is found in the secreted. Beta toxins bind at site-4 of sodium channels and shift the voltage of activation toward more negative potentials thereby affecting sodium channel activation and promoting spontaneous and repetitive firing. This toxin is active against mammals and lethal to mice. Selectively modulates Nav1.4/SCN4A, a sodium channel present in both denervated and innervated skeletal muscle. The protein is Beta-mammal toxin CeII9 of Centruroides elegans (Bark scorpion).